Here is a 210-residue protein sequence, read N- to C-terminus: Large ribosomal subunit protein uL3 (210 aa).

The segment covering 132–144 has biased composition (basic residues); that stretch reads GPMKHGSKYHRRP. The tract at residues 132-152 is disordered; the sequence is GPMKHGSKYHRRPGSAGAKGP.

This sequence belongs to the universal ribosomal protein uL3 family. In terms of assembly, part of the 50S ribosomal subunit. Forms a cluster with proteins L14 and L19.

Functionally, one of the primary rRNA binding proteins, it binds directly near the 3'-end of the 23S rRNA, where it nucleates assembly of the 50S subunit. This is Large ribosomal subunit protein uL3 from Heliobacterium modesticaldum (strain ATCC 51547 / Ice1).